Here is a 137-residue protein sequence, read N- to C-terminus: Large ribosomal subunit protein uL16 (137 aa).

This sequence belongs to the universal ribosomal protein uL16 family. In terms of assembly, part of the 50S ribosomal subunit.

In terms of biological role, binds 23S rRNA and is also seen to make contacts with the A and possibly P site tRNAs. In Methylococcus capsulatus (strain ATCC 33009 / NCIMB 11132 / Bath), this protein is Large ribosomal subunit protein uL16.